Reading from the N-terminus, the 1031-residue chain is Protein draper (1031 aa).

The first 16 residues, 1–16, serve as a signal peptide directing secretion; sequence MLPVILIACLAQLVLA. At 17-800 the chain is on the extracellular side; it reads QADLKDLDGP…DQSENSSRAS (784 aa). Positions 25-100 constitute an EMI domain; it reads GPNICKRREL…YIASAGECVP (76 aa). 6 disulfides stabilise this stretch: Cys29-Cys88, Cys55-Cys62, Cys87-Cys98, Cys102-Cys111, Cys106-Cys117, and Cys119-Cys128. Asn73 carries an N-linked (GlcNAc...) asparagine glycan. EGF-like domains are found at residues 99-129, 137-172, 180-215, 223-258, 266-301, and 309-344; these read VPHC…PACD, YGRN…ARCA, FGAN…PLCD, HGAQ…DVCA, YGPG…ERCF, and YGFN…AKCA. Asn140 is a glycosylation site (N-linked (GlcNAc...) asparagine). 3 disulfides stabilise this stretch: Cys141-Cys153, Cys147-Cys160, and Cys162-Cys171. A glycan (N-linked (GlcNAc...) asparagine) is linked at Asn183. 9 disulfide bridges follow: Cys184–Cys196, Cys190–Cys203, Cys205–Cys214, Cys227–Cys239, Cys233–Cys246, Cys248–Cys257, Cys270–Cys282, Cys276–Cys289, and Cys291–Cys300. The N-linked (GlcNAc...) asparagine glycan is linked to Asn312. 3 cysteine pairs are disulfide-bonded: Cys313–Cys325, Cys319–Cys332, and Cys334–Cys343. A glycan (N-linked (GlcNAc...) asparagine) is linked at Asn329. Asn358 carries an N-linked (GlcNAc...) asparagine glycan. EGF-like domains follow at residues 398–433 and 484–519; these read YGPN…PTCE and FGQD…ERCE. Cystine bridges form between Cys402–Cys414, Cys408–Cys421, Cys423–Cys432, Cys488–Cys500, Cys494–Cys507, and Cys509–Cys518. Residue Asn418 is glycosylated (N-linked (GlcNAc...) asparagine). Asn504 is a glycosylation site (N-linked (GlcNAc...) asparagine). N-linked (GlcNAc...) asparagine glycosylation is found at Asn540, Asn584, and Asn585. The EGF-like 9 domain maps to 572–607; sequence YGENCDKVCRCLNNSSCDPDSGNCICSAGWTGADCA. Cystine bridges form between Cys576–Cys588, Cys582–Cys595, and Cys597–Cys606. The N-linked (GlcNAc...) asparagine glycan is linked to Asn630. An EGF-like 10 domain is found at 660 to 695; it reads YGPGCKLKCNCEHGGECNHVTGQCQCLPGWTGSNCN. Cystine bridges form between Cys664/Cys676, Cys670/Cys683, and Cys685/Cys694. Asn695 and Asn795 each carry an N-linked (GlcNAc...) asparagine glycan. The chain crosses the membrane as a helical span at residues 801 to 821; that stretch reads VALTLVLMTLFACIIFAVFIY. Over 822 to 1031 the chain is Cytoplasmic; that stretch reads YRRRVSNLKT…SPSSSPKFLK (210 aa). Over residues 940-954 the composition is skewed to basic and acidic residues; the sequence is KEGYKDPDEYDHLDY. 2 disordered regions span residues 940-964 and 989-1031; these read KEGY…QKPH and TVLL…KFLK. A compositionally biased stretch (polar residues) spans 1009 to 1031; it reads DNTNTNLDNVSTASPSSSPKFLK.

Belongs to the MEGF family. Interacts (via the cytoplasmic domain) with shark; this is required for the recruitment of drpr and glial cells to severed axons and for the phagocytosis of axonal debris by glial cells following axon injury. Interacts with ced-6. As to quaternary structure, interacts with csw; this results in dephosphorylation of drpr isoform A which is required for the inhibition of glial cell engulfment of axonal debris produced following axonal injury. Phosphorylated on tyrosine residues. Phosphorylation is induced by binding to prtp. It is also induced by binding to the membrane phospholipid phosphatidylserine. Phosphorylation may be mediated directly or indirectly by Src42a and is required for interaction with shark. Post-translationally, dephosphorylated by csw which is required for the inhibition of glial cell engulfment of axonal debris produced following axonal injury. Expressed in adult head (at protein level). Expressed in glia, macrophages and ectoderm (at protein level). Detected in glia around the mushroom body dorsal lobe and in glial processes infiltrating the medial lobe (at protein level). Expressed in adult brain glia including antennal lobe glia (at protein level). Expressed in the larval fat body (at protein level). Expressed in the ovary (at protein level). Isoform B: Predominant isoform in adult glia.

It localises to the cell membrane. Its subcellular location is the cell projection. The protein localises to the axon. It is found in the cytoplasm. The protein resides in the postsynaptic cell membrane. It localises to the cell cortex. Its subcellular location is the phagocytic cup. The protein localises to the cytoplasmic vesicle. It is found in the phagosome. Functionally, receptor which is involved in the phagocytosis of a variety of cells including apoptotic cells, severed and pruned axons, degenerating dendrites, salivary gland cells, germline cells and bacteria. Binds to the ligand prtp which relocates from the endoplasmic reticulum to the cell surface during apoptosis. Ligand-binding may promote tyrosine phosphorylation mediated by Src42a, interaction with shark and subsequent activation of phagocytosis. Also binds to the membrane phospholipid phosphatidylserine which is exposed on the surface of apoptotic cells. Required for the phagocytosis of apoptotic cells by macrophages. Also required for the phagocytosis of apoptotic neurons by glial cells in the embryonic nervous system. Acts downstream of NimC4/simu in the glial phagocytosis of apoptotic neurons. Plays a role in the glial engulfment of larval axons as part of programmed axon pruning during metamorphosis. Also mediates glial cell clearance of severed axons following axonal injury. Required for the engulfment of degenerating dendrites by epidermal cells. Required in the ovary for the engulfment and subsequent processing of dying germline cells by follicular epithelial cells through activation of the JNK/bsk pathway. Plays a role in neuromuscular junction development by mediating the clearance of presynaptic debris and immature boutons which are shed by growing synapses. Required for larval salivary gland cell death which occurs following a rise in steroid levels after puparium formation. Also involved in bacterial phagocytosis. Required for hemocyte phagocytosis of the Gram-positive bacterium S.aureus. Lipoteichoic acid, synthesized by the S.aureus lipoteichoic acid synthase ltaS, acts as a ligand for drpr in this process. Together with Src42a and shark, promotes the migration of macrophages to sites of wounding as part of a signaling cascade where Scr42a detects production of hydrogen peroxide at wound sites which triggers phosphorylation of drpr and subsequent recruitment and activation of shark. Also required for macrophage priming which occurs following phagocytosis of apoptotic cells and ensures that macrophages develop a form of molecular memory that allows them to later mount an inflammatory response to tissue damage and bacterial infection. Is also an essential factor in the regulation of muscle development and myogenesis, and as a consequence is required for normal locomotion. Likely to control the balance between skeletal muscle satellite cells proliferation and differentiation through regulation of the notch signaling pathway. Its function is as follows. Promotes engulfment of axonal debris by glial cells following axonal injury. In terms of biological role, potently inhibits glial cell engulfment of axonal debris produced following axonal injury. In Drosophila melanogaster (Fruit fly), this protein is Protein draper.